The chain runs to 138 residues: uncharacterized protein (138 aa).

The tract at residues 89 to 138 (DDYEDDFEDSDFQDGDFDDFEDEDGFDDDDDFEDDDFEYEDEDNDLDFDE) is disordered.

This is an uncharacterized protein from Treponema pallidum (strain Nichols).